The primary structure comprises 60 residues: Large ribosomal subunit protein uL30 (60 aa).

The protein belongs to the universal ribosomal protein uL30 family. Part of the 50S ribosomal subunit.

This chain is Large ribosomal subunit protein uL30, found in Saccharopolyspora erythraea (strain ATCC 11635 / DSM 40517 / JCM 4748 / NBRC 13426 / NCIMB 8594 / NRRL 2338).